The primary structure comprises 294 residues: tRNA dimethylallyltransferase (294 aa).

10–17 (GPTAVGKT) is a binding site for ATP. 12–17 (TAVGKT) lines the substrate pocket. An interaction with substrate tRNA region spans residues 35 to 38 (DSQQ).

Belongs to the IPP transferase family. In terms of assembly, monomer. Mg(2+) is required as a cofactor.

It catalyses the reaction adenosine(37) in tRNA + dimethylallyl diphosphate = N(6)-dimethylallyladenosine(37) in tRNA + diphosphate. In terms of biological role, catalyzes the transfer of a dimethylallyl group onto the adenine at position 37 in tRNAs that read codons beginning with uridine, leading to the formation of N6-(dimethylallyl)adenosine (i(6)A). This is tRNA dimethylallyltransferase from Streptococcus gordonii (strain Challis / ATCC 35105 / BCRC 15272 / CH1 / DL1 / V288).